A 325-amino-acid polypeptide reads, in one-letter code: NADH-quinone oxidoreductase subunit H (325 aa).

The next 9 helical transmembrane spans lie at 11–31, 50–69, 81–101, 114–134, 154–174, 186–206, 237–257, 265–285, and 304–324; these read ILLS…CGAF, NRVG…KMFF, VIFT…FAIV, IGIL…LFAG, VSYE…AGSF, LWNV…GVAV, FFVG…TLFF, LPPF…FILI, and VCLP…LWQA.

This sequence belongs to the complex I subunit 1 family. In terms of assembly, NDH-1 is composed of 13 different subunits. Subunits NuoA, H, J, K, L, M, N constitute the membrane sector of the complex.

Its subcellular location is the cell inner membrane. It catalyses the reaction a quinone + NADH + 5 H(+)(in) = a quinol + NAD(+) + 4 H(+)(out). Functionally, NDH-1 shuttles electrons from NADH, via FMN and iron-sulfur (Fe-S) centers, to quinones in the respiratory chain. The immediate electron acceptor for the enzyme in this species is believed to be ubiquinone. Couples the redox reaction to proton translocation (for every two electrons transferred, four hydrogen ions are translocated across the cytoplasmic membrane), and thus conserves the redox energy in a proton gradient. This subunit may bind ubiquinone. The polypeptide is NADH-quinone oxidoreductase subunit H (Salmonella arizonae (strain ATCC BAA-731 / CDC346-86 / RSK2980)).